The following is a 376-amino-acid chain: Transmembrane protein 43 homolog (376 aa).

At 1 to 10 (MASLSETLRS) the chain is on the cytoplasmic side. Residues 11–31 (HWPIALFGVILFVAGGTELYW) traverse the membrane as a helical segment. Topologically, residues 32–277 (NEGRAVHNMM…EVFRLEARAQ (246 aa)) are lumenal. The chain crosses the membrane as a helical span at residues 278–298 (VLHTWWWRFVGWLLIFFGVTC). Residues 299 to 323 (NTKILRLLFVRVPLLVALAPDPQFP) lie on the Cytoplasmic side of the membrane. Helical transmembrane passes span 324-344 (VTGNLLIAFSLALTIAAVAWI) and 345-365 (LHRPVIGACLLLAGASPYVWF). Topologically, residues 366 to 376 (TRNLVDYHRLD) are cytoplasmic.

It belongs to the TMEM43 family.

It is found in the endoplasmic reticulum membrane. The protein localises to the nucleus envelope. In terms of biological role, involved in lipid metabolism and utilization. The polypeptide is Transmembrane protein 43 homolog (Drosophila melanogaster (Fruit fly)).